A 531-amino-acid polypeptide reads, in one-letter code: Galactose/methyl galactoside import permease protein MglC (531 aa).

A run of 10 helical transmembrane segments spans residues 193–213, 239–259, 267–287, 300–320, 326–346, 376–396, 424–444, 461–481, 483–503, and 505–525; these read FFLA…CIVV, MFYA…LSIG, VVTG…GLGP, VMSL…AGFF, IHPF…LFFG, LVTF…AWFI, FGVT…GAFF, LDAI…IGKL, GAVV…FLGI, and TNLQ…LDSV.

This sequence belongs to the binding-protein-dependent transport system permease family. AraH/RbsC subfamily. As to quaternary structure, the complex is composed of one ATP-binding protein (MglA), two transmembrane proteins (MglC) and a solute-binding protein (MglB).

The protein localises to the cell membrane. Its function is as follows. Part of the ABC transporter complex MglABC involved in galactose/methyl galactoside import. Probably responsible for the translocation of the substrate across the membrane. The polypeptide is Galactose/methyl galactoside import permease protein MglC (mglC) (Treponema pallidum (strain Nichols)).